The primary structure comprises 78 residues: Putative Fe(2+) transport protein A (78 aa).

Belongs to the FeoA family.

Functionally, might be involved in Fe(2+) ion uptake. The sequence is that of Putative Fe(2+) transport protein A from Helicobacter pylori (strain J99 / ATCC 700824) (Campylobacter pylori J99).